The sequence spans 380 residues: Acyl-coenzyme A diphosphatase SCS3 (380 aa).

Residues 1–7 are Cytoplasmic-facing; sequence MSSKWFN. The chain crosses the membrane as a helical span at residues 8 to 28; that stretch reads AIHLLVCPLTVLVGYLMNAYG. Residues 29 to 43 are Lumenal-facing; the sequence is YGAALQATLNKDGLV. The chain crosses the membrane as a helical span at residues 44–64; the sequence is NAMLVKKGWFWTSLVGWWCII. Topologically, residues 65–88 are cytoplasmic; sequence RYRAVPGATGRDRRHIVQSFKRYA. Residues 89–109 traverse the membrane as a helical segment; the sequence is ILTVWWYVFTQGIWFGVGPIM. The Lumenal segment spans residues 110-233; sequence DLVFVYTGGH…GHWAGGHDPS (124 aa). A helical transmembrane segment spans residues 234 to 254; that stretch reads GHVFLATLMCMFLLGELRVFG. The active site involves His235. Residues 255 to 325 lie on the Cytoplasmic side of the membrane; sequence RRALAHLYAQ…LTRCIACDHP (71 aa). A helical transmembrane segment spans residues 326–346; that stretch reads VIILLTLLVTWLWQLLLTAVA. Residues 347–356 are Lumenal-facing; sequence SRFHTVREHM. Residue His350 is part of the active site. The chain crosses the membrane as a helical span at residues 357–377; it reads SGLLAAYIVTGLVYARDAAAL. Residues 378–380 lie on the Cytoplasmic side of the membrane; the sequence is RPV.

This sequence belongs to the FIT family. Fungal FIT2B/SCS3 subfamily.

It localises to the endoplasmic reticulum membrane. It carries out the reaction an acyl-CoA + H2O = an acyl-4'-phosphopantetheine + adenosine 3',5'-bisphosphate + 2 H(+). It catalyses the reaction (9Z)-octadecenoyl-CoA + H2O = S-(9Z-octadecenoyl)-4'-phosphopantetheine + adenosine 3',5'-bisphosphate + 2 H(+). The catalysed reaction is (5Z,8Z,11Z,14Z)-eicosatetraenoyl-CoA + H2O = S-(5Z,8Z,11Z,14Z-eicosatetraenoyl)-4'-phosphopantetheine + adenosine 3',5'-bisphosphate + 2 H(+). The enzyme catalyses hexadecanoyl-CoA + H2O = S-hexadecanoyl-4'-phosphopantetheine + adenosine 3',5'-bisphosphate + 2 H(+). Fatty acyl-coenzyme A (CoA) diphosphatase that hydrolyzes fatty acyl-CoA to yield acyl-4'-phosphopantetheine and adenosine 3',5'-bisphosphate. Preferentially hydrolyzes unsaturated long-chain acyl-CoA substrates in the endoplasmic reticulum (ER) lumen. This catalytic activity is required for maintaining ER structure and for lipid droplets (LDs) biogenesis, which are lipid storage organelles involved in maintaining lipid and energy homeostasis. May directly bind to diacylglycerol (DAGs) and triacylglycerol, which is also important for LD biogenesis. May support directional budding of nacent LDs from the ER into the cytosol by reducing DAG levels at sites of LD formation. May play a role in the regulation of cell morphology and cytoskeletal organization. Involved in phospholipid biosynthesis. This is Acyl-coenzyme A diphosphatase SCS3 from Saccharomyces cerevisiae (strain ATCC 204508 / S288c) (Baker's yeast).